Here is a 312-residue protein sequence, read N- to C-terminus: MAGTAQGVQTQDVIKISATSGLTPAPQARDHKVEIAKLIDVSTCIGCKACQVGCSEWNDIRSDINAQCVGVYDNPVDLDAKAWTVMRFNEVEENDRLEWLIRKDGCMHCTEPGCLKACPAPGAIIQYANGIVDFQSDKCIGCGYCIAGCPFNIPRMNPEDNRVYKCTLCVDRVSVGQEPACVKTCPTGAIRFGSKEEMKIYAEQRVADLKSRGYENAGLYDPPGVGGTHVMYVLHHADKPELYNGLPKDPQIDLSVTLWKDVLKPVAAVAMGGLALAEVAHYLTVGPNVEEDVEDHHHEFEENKPSKGENNE.

4 4Fe-4S ferredoxin-type domains span residues 35 to 65 (IAKLIDVSTCIGCKACQVGCSEWNDIRSDIN), 97 to 129 (LEWLIRKDGCMHCTEPGCLKACPAPGAIIQYAN), 130 to 159 (GIVDFQSDKCIGCGYCIAGCPFNIPRMNPE), and 164 to 195 (YKCTLCVDRVSVGQEPACVKTCPTGAIRFGSK). Positions 44, 47, 50, 54, 106, 109, 114, 118, 139, 142, 145, 149, 166, 169, 181, and 185 each coordinate [4Fe-4S] cluster.

As to quaternary structure, formate dehydrogenase is a membrane-bound complex, formed by subunits alpha, beta and gamma. It depends on [4Fe-4S] cluster as a cofactor.

Its subcellular location is the cell membrane. In terms of biological role, allows to use formate as major electron donor during aerobic respiration. The beta chain is an electron transfer unit containing 4 cysteine clusters involved in the formation of iron-sulfur centers. Electrons are transferred from the gamma chain to the molybdenum cofactor of the alpha subunit. This Haemophilus influenzae (strain ATCC 51907 / DSM 11121 / KW20 / Rd) protein is Formate dehydrogenase iron-sulfur subunit (fdxH).